Here is an 88-residue protein sequence, read N- to C-terminus: FXYD domain-containing ion transport regulator 4 (88 aa).

The N-terminal stretch at 1–20 (MEEITCAFLLLLAGLPALEA) is a signal peptide. The Extracellular portion of the chain corresponds to 21–38 (SDPVDKDSPFYYDWESLQ). Residues 39–59 (LGGLIFGGLLCIAGIAMALSG) traverse the membrane as a helical segment. Topologically, residues 60–88 (KCKCRRTHKPSSLPGKATPLIIPGSANTC) are cytoplasmic.

It belongs to the FXYD family. In terms of assembly, regulatory subunit of the sodium/potassium-transporting ATPase which is composed of a catalytic alpha subunit, a non-catalytic beta subunit and a regulatory subunit. The regulatory subunit, a member of the FXYD protein family, modulates the enzymatic activity in a tissue- and isoform-specific way by changing affinities of the Na+/K+-ATPase toward Na(+), K(+) or ATP.

The protein resides in the cell membrane. It localises to the basolateral cell membrane. Functionally, associates with and regulates the activity of the sodium/potassium-transporting ATPase (NKA) which catalyzes the hydrolysis of ATP coupled with the exchange of Na(+) and K(+) ions across the plasma membrane. Increases the apparent affinity of the transporter for Na(+) and increases NKA activity. This chain is FXYD domain-containing ion transport regulator 4 (Fxyd4), found in Mus musculus (Mouse).